The sequence spans 440 residues: Xaa-Pro dipeptidase (440 aa).

Mn(2+) contacts are provided by Asp244, Asp255, His335, Glu380, and Glu419.

It belongs to the peptidase M24B family. Bacterial-type prolidase subfamily. Requires Mn(2+) as cofactor.

It carries out the reaction Xaa-L-Pro dipeptide + H2O = an L-alpha-amino acid + L-proline. Splits dipeptides with a prolyl residue in the C-terminal position. This Shewanella loihica (strain ATCC BAA-1088 / PV-4) protein is Xaa-Pro dipeptidase.